Here is a 122-residue protein sequence, read N- to C-terminus: Large ribosomal subunit protein uL14 (122 aa).

This sequence belongs to the universal ribosomal protein uL14 family. As to quaternary structure, part of the 50S ribosomal subunit. Forms a cluster with proteins L3 and L19. In the 70S ribosome, L14 and L19 interact and together make contacts with the 16S rRNA in bridges B5 and B8.

Binds to 23S rRNA. Forms part of two intersubunit bridges in the 70S ribosome. In Clostridium perfringens (strain ATCC 13124 / DSM 756 / JCM 1290 / NCIMB 6125 / NCTC 8237 / Type A), this protein is Large ribosomal subunit protein uL14.